The sequence spans 471 residues: Ammonium transporter Rh type B (471 aa).

Residues 1-13 (MAGSPSRAAGRRL) are Cytoplasmic-facing. The helical transmembrane segment at 14–33 (QLPLLSFLQGATAVLFAVFV) threads the bilayer. Over 34-60 (RYNHKTDAALWHRGNHSNADNEFYFRY) the chain is Extracellular. N48 carries N-linked (GlcNAc...) asparagine glycosylation. Residues 61 to 81 (PSFQDVHAMVFVGFGFLMVFL) form a helical membrane-spanning segment. The Cytoplasmic portion of the chain corresponds to 82 to 85 (QRYG). A helical transmembrane segment spans residues 86-106 (FSSVGFTFLLAAFALQWSTLV). At 107–123 (QGFLHSFHGGHIHVGVE) the chain is on the extracellular side. Residues 124–144 (SMINADFCAGAVLISFGAVLG) traverse the membrane as a helical segment. The Cytoplasmic portion of the chain corresponds to 145–148 (KTGP). The chain crosses the membrane as a helical span at residues 149 to 169 (AQLLLMALLEVVLFGINEFVL). At 170–177 (LHLLGVRD) the chain is on the extracellular side. Residues 178–200 (AGGSMTIHTFGAYFGLVLSQVLY) traverse the membrane as a helical segment. At 201-217 (RPQLEKSKHRQGLYHSD) the chain is on the cytoplasmic side. A helical transmembrane segment spans residues 218–238 (LFAMIGTIFLWIFWPSFNAAL). Topologically, residues 239–249 (TSLGAGQHRTA) are extracellular. Residues 250 to 270 (LNTYYSLAASTLGTFALSALV) form a helical membrane-spanning segment. The Cytoplasmic portion of the chain corresponds to 271 to 280 (GEDGRLDMVH). Residues 281–301 (IQNAALAGRVVVGTSSEMMLT) traverse the membrane as a helical segment. A topological domain (extracellular) is located at residue P302. A helical membrane pass occupies residues 303 to 323 (FGALAAGFLAGTVSTLGYKFF). Residues 324 to 344 (TPILESKFKVQDTCGVHNLHG) are Cytoplasmic-facing. The chain crosses the membrane as a helical span at residues 345–365 (MPGVLGVLLGVLVAGLATHEA). The Extracellular portion of the chain corresponds to 366 to 391 (YGDGLESVFPLIAEGQRSATSQAMYQ). A helical transmembrane segment spans residues 392 to 412 (LFGLFVTLMFASVGGGLGGLL). The Cytoplasmic segment spans residues 413–471 (LKLPFLDSPPDSQCYEDQVHWQAPGATLSPLPTPAFQVPGEHEDKAQRPLRVEEADTQA). The segment at 414–422 (KLPFLDSPP) is interaction with ANK3. Positions 427–430 (YEDQ) match the Basolateral sorting signal motif. The tract at residues 437–471 (GATLSPLPTPAFQVPGEHEDKAQRPLRVEEADTQA) is disordered. Residues 452-471 (GEHEDKAQRPLRVEEADTQA) show a composition bias toward basic and acidic residues.

Belongs to the ammonium transporter (TC 2.A.49) family. Rh subfamily. As to quaternary structure, interacts (via C-terminus) with ANK2 and ANK3; required for targeting to the basolateral membrane. In terms of processing, N-glycosylated.

The protein localises to the cell membrane. The protein resides in the basolateral cell membrane. The catalysed reaction is NH4(+)(in) = NH4(+)(out). The enzyme catalyses methylamine(out) = methylamine(in). It carries out the reaction CO2(out) = CO2(in). Its function is as follows. Ammonium transporter involved in the maintenance of acid-base homeostasis. Transports ammonium and its related derivative methylammonium across the basolateral plasma membrane of epithelial cells likely contributing to renal transepithelial ammonia transport and ammonia metabolism. May transport either NH4(+) or NH3 ammonia species predominantly mediating an electrogenic NH4(+) transport. May act as a CO2 channel providing for renal acid secretion. The sequence is that of Ammonium transporter Rh type B (RHBG) from Pongo pygmaeus (Bornean orangutan).